Reading from the N-terminus, the 248-residue chain is Ribosomal RNA small subunit methyltransferase J (248 aa).

Residues 98–99, 114–115, 150–151, and Asp-168 contribute to the S-adenosyl-L-methionine site; these read RD, ER, and SS.

This sequence belongs to the methyltransferase superfamily. RsmJ family.

The protein resides in the cytoplasm. It catalyses the reaction guanosine(1516) in 16S rRNA + S-adenosyl-L-methionine = N(2)-methylguanosine(1516) in 16S rRNA + S-adenosyl-L-homocysteine + H(+). Its function is as follows. Specifically methylates the guanosine in position 1516 of 16S rRNA. This is Ribosomal RNA small subunit methyltransferase J from Shewanella baltica (strain OS195).